A 299-amino-acid polypeptide reads, in one-letter code: Probable lipid kinase YegS (299 aa).

The DAGKc domain occupies 2–133; that stretch reads AEFPASLLIL…IDMAQVNKQT (132 aa). ATP is bound by residues threonine 40, 66-72, and threonine 95; that span reads GDGTINE. Mg(2+) contacts are provided by leucine 215, aspartate 218, and leucine 220. Glutamate 271 acts as the Proton acceptor in catalysis.

This sequence belongs to the diacylglycerol/lipid kinase family. YegS lipid kinase subfamily. Requires Mg(2+) as cofactor. Ca(2+) serves as cofactor.

It localises to the cytoplasm. Probably phosphorylates lipids; the in vivo substrate is unknown. The chain is Probable lipid kinase YegS from Escherichia coli O45:K1 (strain S88 / ExPEC).